A 285-amino-acid chain; its full sequence is Dermonecrotic toxin LlSicTox-alphaIII1ii (285 aa).

His12 is an active-site residue. Residues Glu32 and Asp34 each contribute to the Mg(2+) site. His47 (nucleophile) is an active-site residue. Cysteines 51 and 57 form a disulfide. Asp91 contributes to the Mg(2+) binding site.

This sequence belongs to the arthropod phospholipase D family. Class I subfamily. Requires Mg(2+) as cofactor. Expressed by the venom gland.

Its subcellular location is the secreted. It carries out the reaction an N-(acyl)-sphingosylphosphocholine = an N-(acyl)-sphingosyl-1,3-cyclic phosphate + choline. The catalysed reaction is an N-(acyl)-sphingosylphosphoethanolamine = an N-(acyl)-sphingosyl-1,3-cyclic phosphate + ethanolamine. It catalyses the reaction a 1-acyl-sn-glycero-3-phosphocholine = a 1-acyl-sn-glycero-2,3-cyclic phosphate + choline. The enzyme catalyses a 1-acyl-sn-glycero-3-phosphoethanolamine = a 1-acyl-sn-glycero-2,3-cyclic phosphate + ethanolamine. Dermonecrotic toxins cleave the phosphodiester linkage between the phosphate and headgroup of certain phospholipids (sphingolipid and lysolipid substrates), forming an alcohol (often choline) and a cyclic phosphate. This toxin acts on sphingomyelin (SM) with high activity (56.8 U/mg). It may also act on ceramide phosphoethanolamine (CPE), lysophosphatidylcholine (LPC) and lysophosphatidylethanolamine (LPE), but not on lysophosphatidylserine (LPS), and lysophosphatidylglycerol (LPG). It acts by transphosphatidylation, releasing exclusively cyclic phosphate products as second products. Induces dermonecrosis, hemolysis, increased vascular permeability, edema, inflammatory response, and platelet aggregation. Is lethal to mice. This Loxosceles laeta (South American recluse spider) protein is Dermonecrotic toxin LlSicTox-alphaIII1ii.